The following is a 457-amino-acid chain: ATP synthase subunit beta (457 aa).

G147–T154 contacts ATP.

The protein belongs to the ATPase alpha/beta chains family. In terms of assembly, F-type ATPases have 2 components, CF(1) - the catalytic core - and CF(0) - the membrane proton channel. CF(1) has five subunits: alpha(3), beta(3), gamma(1), delta(1), epsilon(1). CF(0) has three main subunits: a(1), b(2) and c(9-12). The alpha and beta chains form an alternating ring which encloses part of the gamma chain. CF(1) is attached to CF(0) by a central stalk formed by the gamma and epsilon chains, while a peripheral stalk is formed by the delta and b chains.

The protein localises to the cell inner membrane. The enzyme catalyses ATP + H2O + 4 H(+)(in) = ADP + phosphate + 5 H(+)(out). Produces ATP from ADP in the presence of a proton gradient across the membrane. The catalytic sites are hosted primarily by the beta subunits. In Histophilus somni (strain 2336) (Haemophilus somnus), this protein is ATP synthase subunit beta.